Reading from the N-terminus, the 130-residue chain is MRCVCASIRRTRIIEFLMFFALSSSTASCAPFSVSNVTHASPRPRWLRWHEKTSMAGNPVSLSIATPNGAKSSSICSANTVGFTPDTYTCPDIRDSSTDTLSRSKRISSLSLTKPISSSSESETKVLSAS.

Residues 1-29 (MRCVCASIRRTRIIEFLMFFALSSSTASC) form the signal peptide. An N-linked (GlcNAc...) asparagine glycan is attached at asparagine 36. Positions 45 to 48 (RWLR) match the RxLR motif.

The protein belongs to the RxLR effector family.

Its subcellular location is the secreted. It localises to the host cytoplasm. It is found in the host nucleus. Functionally, effector that acts as a broad suppressor of cell death to interrupt plant immunity. Inhibits cell death induced by cell death-inducing proteins, including the PAMP elicitor INF1 from P.infestans. This is Secreted RxLR effector protein 68 from Plasmopara viticola (Downy mildew of grapevine).